Consider the following 293-residue polypeptide: ATP synthase gamma chain (293 aa).

Belongs to the ATPase gamma chain family. F-type ATPases have 2 components, CF(1) - the catalytic core - and CF(0) - the membrane proton channel. CF(1) has five subunits: alpha(3), beta(3), gamma(1), delta(1), epsilon(1). CF(0) has three main subunits: a, b and c.

The protein resides in the cell inner membrane. Functionally, produces ATP from ADP in the presence of a proton gradient across the membrane. The gamma chain is believed to be important in regulating ATPase activity and the flow of protons through the CF(0) complex. The polypeptide is ATP synthase gamma chain (Nitratidesulfovibrio vulgaris (strain DSM 19637 / Miyazaki F) (Desulfovibrio vulgaris)).